A 61-amino-acid chain; its full sequence is Small ribosomal subunit protein uS14B (61 aa).

Zn(2+) contacts are provided by C24, C27, C40, and C43.

Belongs to the universal ribosomal protein uS14 family. Zinc-binding uS14 subfamily. In terms of assembly, part of the 30S ribosomal subunit. Contacts proteins S3 and S10. It depends on Zn(2+) as a cofactor.

Its function is as follows. Binds 16S rRNA, required for the assembly of 30S particles and may also be responsible for determining the conformation of the 16S rRNA at the A site. This Streptococcus pyogenes serotype M6 (strain ATCC BAA-946 / MGAS10394) protein is Small ribosomal subunit protein uS14B.